We begin with the raw amino-acid sequence, 499 residues long: Glycerol kinase (499 aa).

Threonine 13 is a binding site for ADP. ATP is bound by residues threonine 13, threonine 14, and serine 15. Threonine 13 is a binding site for sn-glycerol 3-phosphate. Arginine 17 contacts ADP. Residues arginine 83, glutamate 84, tyrosine 135, and aspartate 245 each coordinate sn-glycerol 3-phosphate. 5 residues coordinate glycerol: arginine 83, glutamate 84, tyrosine 135, aspartate 245, and glutamine 246. 2 residues coordinate ADP: threonine 267 and glycine 310. The ATP site is built by threonine 267, glycine 310, glutamine 314, and glycine 411. ADP contacts are provided by glycine 411 and asparagine 415.

It belongs to the FGGY kinase family.

It catalyses the reaction glycerol + ATP = sn-glycerol 3-phosphate + ADP + H(+). It functions in the pathway polyol metabolism; glycerol degradation via glycerol kinase pathway; sn-glycerol 3-phosphate from glycerol: step 1/1. With respect to regulation, inhibited by fructose 1,6-bisphosphate (FBP). Functionally, key enzyme in the regulation of glycerol uptake and metabolism. Catalyzes the phosphorylation of glycerol to yield sn-glycerol 3-phosphate. The polypeptide is Glycerol kinase (Xanthomonas euvesicatoria pv. vesicatoria (strain 85-10) (Xanthomonas campestris pv. vesicatoria)).